A 372-amino-acid polypeptide reads, in one-letter code: Glutamate 5-kinase (372 aa).

K14 serves as a coordination point for ATP. Substrate is bound by residues S54, D141, and N153. T173–D174 serves as a coordination point for ATP. The PUA domain maps to R280–M358.

The protein belongs to the glutamate 5-kinase family.

The protein resides in the cytoplasm. It catalyses the reaction L-glutamate + ATP = L-glutamyl 5-phosphate + ADP. It participates in amino-acid biosynthesis; L-proline biosynthesis; L-glutamate 5-semialdehyde from L-glutamate: step 1/2. Its function is as follows. Catalyzes the transfer of a phosphate group to glutamate to form L-glutamate 5-phosphate. In Pseudomonas fluorescens (strain ATCC BAA-477 / NRRL B-23932 / Pf-5), this protein is Glutamate 5-kinase.